We begin with the raw amino-acid sequence, 524 residues long: Metalloendopeptidase OMA1, mitochondrial (524 aa).

The transit peptide at 1–13 directs the protein to the mitochondrion; sequence MSFICGLQSAARN. The propeptide occupies 14–143; that stretch reads HVFFRFNSLS…RNFHTSPRFQ (130 aa). Residues 144 to 195 lie on the Mitochondrial matrix side of the membrane; it reads AAPVPLLLMILKPVQKLFAIIVGRGIRKWWQALPPNKKEVVKENIRKNKWKL. The segment at 148–167 is cardiolipin-binding; sequence PLLLMILKPVQKLFAIIVGR. The tract at residues 165-195 is stress-sensor region; sequence VGRGIRKWWQALPPNKKEVVKENIRKNKWKL. The chain crosses the membrane as a helical span at residues 196-216; sequence FLGLSSFGLLFVVFYFTHLEV. His327 provides a ligand contact to Zn(2+). Glu328 is a catalytic residue. Zn(2+)-binding residues include His331 and Glu392. Residues Cys407 and Cys465 are joined by a disulfide bond.

It belongs to the peptidase M48 family. Homooligomer. Requires Zn(2+) as cofactor. Post-translationally, may form a redox-dependent disulfide bond. Exists in a semi-oxidized state and is activated by prolonged hypoxia. In terms of processing, autocatalytically cleaved in response to mitochondrial depolarization both at the N-terminus and C-terminus to generate the short active form (S-OMA1). Autocatalytic processing at the C-terminus takes place at residues 447-456. The S-OMA1 form is unstable. OMA1 pre-processing by AFG3L2 may participate in maturation before OMA1 autocatalytic cleavage. Degraded by YMEL1 in response to membrane depolarization. Protein turnover is regulated by prohibitin (PHB and PHB2), which promotes degradation of OMA1 in a cardiolipin-binding manner. Widely expressed, with strong expression in the heart, skeletal muscle, kidney and liver.

Its subcellular location is the mitochondrion inner membrane. With respect to regulation, protease activity is activated upon autocatalytic cleavage in response to mitochondrial depolarization. In terms of biological role, metalloprotease that is part of the quality control system in the inner membrane of mitochondria. Activated in response to various mitochondrial stress, leading to the proteolytic cleavage of target proteins, such as OPA1, UQCC3 and DELE1. Involved in the fusion of the mitochondrial inner membranes by mediating cleavage of OPA1 at S1 position, generating the soluble OPA1 (S-OPA1), which cooperates with the membrane form (L-OPA1) to coordinate the fusion of mitochondrial inner membranes. Following stress conditions that induce loss of mitochondrial membrane potential, mediates cleavage of OPA1, leading to excess production of soluble OPA1 (S-OPA1) and negative regulation of mitochondrial fusion. Involved in mitochondrial safeguard in response to transient mitochondrial membrane depolarization (flickering) by catalyzing cleavage of OPA1, leading to excess production of S-OPA1, preventing mitochondrial hyperfusion. Also acts as a regulator of apoptosis: upon BAK and BAX aggregation, mediates cleavage of OPA1, leading to the remodeling of mitochondrial cristae and allowing the release of cytochrome c from mitochondrial cristae. In depolarized mitochondria, may also act as a backup protease for PINK1 by mediating PINK1 cleavage and promoting its subsequent degradation by the proteasome. May also cleave UQCC3 in response to mitochondrial depolarization. Also acts as an activator of the integrated stress response (ISR): in response to mitochondrial stress, mediates cleavage of DELE1 to generate the processed form of DELE1 (S-DELE1), which translocates to the cytosol and activates EIF2AK1/HRI to trigger the ISR. Its role in mitochondrial quality control is essential for regulating lipid metabolism as well as to maintain body temperature and energy expenditure under cold-stress conditions. Binds cardiolipin, possibly regulating its protein turnover. Required for the stability of the respiratory supercomplexes. The chain is Metalloendopeptidase OMA1, mitochondrial from Homo sapiens (Human).